Reading from the N-terminus, the 1444-residue chain is MALSQHEMFEKLLDQLDLAADVRQDPSLTSGTVQNVTIHEQSRRYDFTLGFDAILPFQTFNAIATKLPLVFQQIAATDLSVVVTQPTITDELLAQYWQYVVTHAEIGTGIVRELCEKQVPTLENDRAVIKTENEQIRQYLIQQGLGKLEETYRQVGFSGLRMQAEVDEEQAAQSMAAFQAQRAEETAKMAKAAAEVVKQQAAKQKQVQTDGPVQMGRQMKMTDAPQQMVTITQEERSVTVEGYVFDVEVRELRSKRQLLIFKVTDYSSSFIAKKFSNGPEDEAMFARIQKGQWLRVRGSVQEDNYSRELTINAQDIQTVSHPDPTDDAEGEKRVELHLHTNMSQMDAMNPISDYVKRAKEWGHKAIAVTDHAGLQAYPEAHSAAVKAGLKMLYGVEINLVDDGTPVAYRADEPRDLASAEYVVFDVETTGLSAVYDKVIELAAVKMKDGKVIDQFEEMIDPGFPLSELTINLTHITDDMVHGSKSEVDVFKLFQQFCDGAIMVGHNVTFDVGFLDNGYERHGLADIDNPVIDTLELSRMLHPERKNHKLDTLAKQYKVSLEHHHRANADAEATGYLLYALEKEAAKMYGMTTLNQLNDRVGAGDAYKAARPSHAIVFAKTQAGLKNLFKLVSLSNVKYFYRVPRVPRSQLQKLREGLLVGSACSNGEVFTAMMQKGEAEARAKASFYDYLEVQPLPVYQPLIEAGLIKGEAHLKDIIQKIIKIGSELEKPVVATGDAHYLDQHDAIYRQILIHSQGGANPLNRHSLPDVHFRSTSEMLTDFSWLGEEKAHELVVDNSNLIANWVDDDITPVKDKLYTPEVPGVEENLKHDVMTTAHELYGDPLPDIVAQRLDKELKSIIGNGFSVIYNIAQRLVLKSNKDGYLVGSRGSVGSSLAATMAGITEVNPLPPHYRCPNCQYSEFFTHGEIGSGFDLPDKQCPKCGADLHKDGHDIPFETFLGFHGDKVPDIDLNFSGDYQPIAHNYIKVMFGEDHSFRAGTIGTVADKTAYGYVKAYERDTGQQLRGAEIDRLAQGDTGVKRTTGQHPAGILIVPADMDIYDFTPIQYPADDQNAAWMTTHFDFHSIHDNILKMDVLGHDDPTMIRMLQDLSGVEPKSIPTDDPGVMALFSGTKSLGVTPEQINSKMGTLGIPEFGTRFVRGMLEETKPTTFSELLQISGLSHGTDVWLGNAEELIKQGIVTLKEVIGCRDNIMMDLIHWGMEDSMAFNIMEHVRKGRGIPDDWQKAMRENENVPDWYIESCLKIKYMFPKAHATAYILMALRIAWFKVHYPLIYYTAYFSVRAEDFDLAAMSHGKEAVKAAMKEITDKGMDASTKEKQLLTVLEIANECLERGFKIKMIDVTKSDSHNFLIQDDHTILAPFRAVPGLGDNVAKQIVAAREEKPFLSKEDLANRGKVSKTLIDYMTTNHVLDDLPDENQLSLFDGLF.

An Exonuclease domain is found at 421–577 (YVVFDVETTG…ADAEATGYLL (157 aa)).

This sequence belongs to the DNA polymerase type-C family. PolC subfamily.

The protein resides in the cytoplasm. The enzyme catalyses DNA(n) + a 2'-deoxyribonucleoside 5'-triphosphate = DNA(n+1) + diphosphate. Its function is as follows. Required for replicative DNA synthesis. This DNA polymerase also exhibits 3' to 5' exonuclease activity. This chain is DNA polymerase III PolC-type, found in Lacticaseibacillus paracasei (strain ATCC 334 / BCRC 17002 / CCUG 31169 / CIP 107868 / KCTC 3260 / NRRL B-441) (Lactobacillus paracasei).